The chain runs to 371 residues: Probable RNA 3'-terminal phosphate cyclase-like protein (371 aa).

Belongs to the RNA 3'-terminal cyclase family. Type 2 subfamily. Part of the small subunit (SSU) processome, composed of more than 70 proteins and the RNA chaperone small nucleolar RNA (snoRNA) U3.

It localises to the nucleus. The protein localises to the nucleolus. Functionally, part of the small subunit (SSU) processome, first precursor of the small eukaryotic ribosomal subunit. During the assembly of the SSU processome in the nucleolus, many ribosome biogenesis factors, an RNA chaperone and ribosomal proteins associate with the nascent pre-rRNA and work in concert to generate RNA folding, modifications, rearrangements and cleavage as well as targeted degradation of pre-ribosomal RNA by the RNA exosome. Does not have cyclase activity. The polypeptide is Probable RNA 3'-terminal phosphate cyclase-like protein (rcl1) (Dictyostelium discoideum (Social amoeba)).